The primary structure comprises 688 residues: Glycine--tRNA ligase beta subunit (688 aa).

It belongs to the class-II aminoacyl-tRNA synthetase family. As to quaternary structure, tetramer of two alpha and two beta subunits.

Its subcellular location is the cytoplasm. It catalyses the reaction tRNA(Gly) + glycine + ATP = glycyl-tRNA(Gly) + AMP + diphosphate. This is Glycine--tRNA ligase beta subunit from Shewanella oneidensis (strain ATCC 700550 / JCM 31522 / CIP 106686 / LMG 19005 / NCIMB 14063 / MR-1).